Consider the following 403-residue polypeptide: Nucleoporin nup44 (403 aa).

Polar residues-rich tracts occupy residues 1-31 (MAFS…TTKP) and 67-124 (FGKT…DETN). The segment at 1 to 124 (MAFSFGQQGS…NPTKPVDETN (124 aa)) is disordered.

The protein resides in the cytoplasm. Its subcellular location is the nucleus. Its function is as follows. Functions as a component of the nuclear pore complex (NPC). NPC components, collectively referred to as nucleoporins (NUPs), can play the role of both NPC structural components and of docking or interaction partners for transiently associated nuclear transport factors. Active directional transport is assured by both, a Phe-Gly (FG) repeat affinity gradient for these transport factors across the NPC and a transport cofactor concentration gradient across the nuclear envelope. This is Nucleoporin nup44 (nup44) from Schizosaccharomyces pombe (strain 972 / ATCC 24843) (Fission yeast).